The primary structure comprises 150 residues: Transcriptional repressor NrdR (150 aa).

The segment at 3–33 (CPYCTGESAVIDTRELDNGETIRRRRRCKHC) is a zinc-finger region. Residues 48-138 (VMVVKKNGDR…VYRSFSDLGK (91 aa)) enclose the ATP-cone domain.

The protein belongs to the NrdR family. The cofactor is Zn(2+).

Its function is as follows. Negatively regulates transcription of bacterial ribonucleotide reductase nrd genes and operons by binding to NrdR-boxes. This Herpetosiphon aurantiacus (strain ATCC 23779 / DSM 785 / 114-95) protein is Transcriptional repressor NrdR.